The chain runs to 199 residues: Minor spike protein H (199 aa).

The tract at residues 171–199 (EDSNGPRLSNLREEKKPNQMPLKNGKLNT) is disordered.

The protein belongs to the microviridae H protein family.

The protein localises to the virion. Functionally, probably triggers with protein G the injection of the phage DNA into the host upon conformational changes induced by virus-host receptor interaction. In Bdellovibrio bacteriovorus (Bacteriophage phiMH2K), this protein is Minor spike protein H.